The primary structure comprises 399 residues: 4-hydroxy-3-methylbut-2-enyl diphosphate reductase (399 aa).

Cysteine 66 is a binding site for [4Fe-4S] cluster. A (2E)-4-hydroxy-3-methylbut-2-enyl diphosphate-binding site is contributed by histidine 96. A dimethylallyl diphosphate-binding site is contributed by histidine 96. Histidine 96 provides a ligand contact to isopentenyl diphosphate. Cysteine 157 contributes to the [4Fe-4S] cluster binding site. Histidine 185 contributes to the (2E)-4-hydroxy-3-methylbut-2-enyl diphosphate binding site. Residue histidine 185 participates in dimethylallyl diphosphate binding. Isopentenyl diphosphate is bound at residue histidine 185. Glutamate 187 acts as the Proton donor in catalysis. Threonine 250 is a (2E)-4-hydroxy-3-methylbut-2-enyl diphosphate binding site. Cysteine 288 contributes to the [4Fe-4S] cluster binding site. 4 residues coordinate (2E)-4-hydroxy-3-methylbut-2-enyl diphosphate: serine 317, serine 318, asparagine 319, and serine 380. Positions 317, 318, 319, and 380 each coordinate dimethylallyl diphosphate. Residues serine 317, serine 318, asparagine 319, and serine 380 each contribute to the isopentenyl diphosphate site.

Belongs to the IspH family. [4Fe-4S] cluster is required as a cofactor.

It catalyses the reaction isopentenyl diphosphate + 2 oxidized [2Fe-2S]-[ferredoxin] + H2O = (2E)-4-hydroxy-3-methylbut-2-enyl diphosphate + 2 reduced [2Fe-2S]-[ferredoxin] + 2 H(+). It carries out the reaction dimethylallyl diphosphate + 2 oxidized [2Fe-2S]-[ferredoxin] + H2O = (2E)-4-hydroxy-3-methylbut-2-enyl diphosphate + 2 reduced [2Fe-2S]-[ferredoxin] + 2 H(+). It participates in isoprenoid biosynthesis; dimethylallyl diphosphate biosynthesis; dimethylallyl diphosphate from (2E)-4-hydroxy-3-methylbutenyl diphosphate: step 1/1. Its pathway is isoprenoid biosynthesis; isopentenyl diphosphate biosynthesis via DXP pathway; isopentenyl diphosphate from 1-deoxy-D-xylulose 5-phosphate: step 6/6. Its function is as follows. Catalyzes the conversion of 1-hydroxy-2-methyl-2-(E)-butenyl 4-diphosphate (HMBPP) into a mixture of isopentenyl diphosphate (IPP) and dimethylallyl diphosphate (DMAPP). Acts in the terminal step of the DOXP/MEP pathway for isoprenoid precursor biosynthesis. The sequence is that of 4-hydroxy-3-methylbut-2-enyl diphosphate reductase from Synechococcus sp. (strain CC9605).